The primary structure comprises 607 residues: MKRKLDVNDVPVPTEEAEAANGKATFASLGLDARLLQGIAKQNFQSPTLVQSKAIPLTLEGRDILARAKTGSGKTAAYLLPILHSILKRKELSPTQCTSALILVPTRELADQVYKTVESFTAFCAKDVRAVNLTQRVSDAVQRSLLADSPDIVIATPARASLNANTSALLLTNLTHMVIDEADLVLSYGYDEDLQNVAKIMPKGVQTVLMSATLTSEVETLKGLFCRNPEVLKLEEAEDEGKGVSQFVVKCAEDEKFLLVYVIFKLKLIKGKCIIFVGDIDRCYRLKLFLEQFGTRSCILNSQLPVNSRIHVVEEFNKNVYDIIIASDEHEVLGDEDEPKPEETEEVEADDASGEKEDAKDAKKETKQPSKKKQKTGKKDKEYGVSRGIDFKNVACVLNFDLPTSSKSYTHRIGRTARAGQTGMALSFVIPSALYRKHKPTSIESAKDDEKVLAKIIKHQAKKGKEVKPYNFDMKQVDAFRYRMGDALRAVTSIAVQEAKAREIRQELMKSEKLKRHFEENPSDLYHLRHDGELRPARVQAHLKHVPDYLLPKEGKKGITGGDIGFVGMHKTTENRIRKARAANKAKGRGKGRKSDPLKTFKAKSRK.

Residues 24–52 carry the Q motif motif; it reads ATFASLGLDARLLQGIAKQNFQSPTLVQS. Residues 55–232 enclose the Helicase ATP-binding domain; the sequence is IPLTLEGRDI…GLFCRNPEVL (178 aa). 68-75 contacts ATP; it reads AKTGSGKT. A DEAD box motif is present at residues 180-183; sequence DEAD. The Helicase C-terminal domain occupies 243–475; that stretch reads GVSQFVVKCA…EVKPYNFDMK (233 aa). Disordered regions lie at residues 332-380 and 580-607; these read VLGD…GKKD and ARAANKAKGRGKGRKSDPLKTFKAKSRK. A compositionally biased stretch (acidic residues) spans 334 to 352; sequence GDEDEPKPEETEEVEADDA. The span at 353–368 shows a compositional bias: basic and acidic residues; it reads SGEKEDAKDAKKETKQ. The segment covering 580 to 592 has biased composition (basic residues); the sequence is ARAANKAKGRGKG.

The protein belongs to the DEAD box helicase family. DDX56/DBP9 subfamily.

The protein localises to the nucleus. The protein resides in the nucleolus. The enzyme catalyses ATP + H2O = ADP + phosphate + H(+). In terms of biological role, ATP-binding RNA helicase involved in the biogenesis of 60S ribosomal subunits and is required for the normal formation of 25S and 5.8S rRNAs. The chain is ATP-dependent RNA helicase dbp9 (dbp9) from Sclerotinia sclerotiorum (strain ATCC 18683 / 1980 / Ss-1) (White mold).